The primary structure comprises 252 residues: tRNA-cytidine(32) 2-sulfurtransferase (252 aa).

Residues 37–42 (SGGKDS) carry the PP-loop motif motif. Residues Cys-112, Cys-115, and Cys-202 each contribute to the [4Fe-4S] cluster site.

The protein belongs to the TtcA family. In terms of assembly, homodimer. The cofactor is Mg(2+). It depends on [4Fe-4S] cluster as a cofactor.

Its subcellular location is the cytoplasm. It carries out the reaction cytidine(32) in tRNA + S-sulfanyl-L-cysteinyl-[cysteine desulfurase] + AH2 + ATP = 2-thiocytidine(32) in tRNA + L-cysteinyl-[cysteine desulfurase] + A + AMP + diphosphate + H(+). It participates in tRNA modification. Catalyzes the ATP-dependent 2-thiolation of cytidine in position 32 of tRNA, to form 2-thiocytidine (s(2)C32). The sulfur atoms are provided by the cysteine/cysteine desulfurase (IscS) system. In Geotalea daltonii (strain DSM 22248 / JCM 15807 / FRC-32) (Geobacter daltonii), this protein is tRNA-cytidine(32) 2-sulfurtransferase.